The sequence spans 1120 residues: Topless-related protein 1 (1120 aa).

The LisH domain occupies 4 to 36 (LSRELVFLILQFLDEEKFKETVHKLEQESGFFF). The region spanning 34–92 (FFFNMKYFEDEVHNGNWDEVEKYLSGFTKVDDNRYSMKIFFEIRKQKYLEALDRHDRPK) is the CTLH domain. 2 disordered regions span residues 210–235 (ARAP…PLGA) and 283–307 (HPRT…SKRT). Ser214 is subject to Phosphoserine. WD repeat units follow at residues 353 to 393 (SQGS…RLVQ), 415 to 454 (EPVV…DMRQ), 460 to 501 (AHVG…KRYT), 504 to 545 (GHEA…SRVD), 548 to 591 (APGR…VKRT), 595 to 634 (FHKR…LLTA), 639 to 678 (GGLQ…RLLH), 699 to 745 (ERPA…EPSQ), 755 to 794 (MRVT…RNAT), 822 to 860 (NPEE…TMAT), 863 to 903 (PPPP…VKSK), 906 to 945 (GHSK…KQKS), 999 to 1038 (ESAA…LRCR), and 1052 to 1091 (SNVH…GKWG). Positions 1087–1120 (EGKWGVAPPPENGSASAVTATPSVGASASDQPQR) are disordered. Polar residues predominate over residues 1099-1120 (GSASAVTATPSVGASASDQPQR).

As to quaternary structure, tetramer. Interacts with SNC1 (via TIR domain) and HDA19. Interacts with SPL (via EAR motif). Interacts with SPEAR3/TIE1. Binds to and corepresses GAF1/IDD2. As to expression, highly expressed in stamen primordium, microsporocyte, ovule primordium and megasporocyte during sporogenesis.

It localises to the nucleus. Its function is as follows. Transcriptional corepressor. Activates TIR-NB-LRR R protein-mediated immune responses through repression of negative regulators such as CNGC2/DND1. Negative regulator of jasmonate responses. This is Topless-related protein 1 (TPR1) from Arabidopsis thaliana (Mouse-ear cress).